A 299-amino-acid polypeptide reads, in one-letter code: UDP-N-acetylenolpyruvoylglucosamine reductase (299 aa).

The FAD-binding PCMH-type domain occupies Arg-29–Ala-193. The active site involves Arg-173. Ser-222 (proton donor) is an active-site residue. Glu-292 is an active-site residue.

This sequence belongs to the MurB family. It depends on FAD as a cofactor.

The protein resides in the cytoplasm. The enzyme catalyses UDP-N-acetyl-alpha-D-muramate + NADP(+) = UDP-N-acetyl-3-O-(1-carboxyvinyl)-alpha-D-glucosamine + NADPH + H(+). Its pathway is cell wall biogenesis; peptidoglycan biosynthesis. In terms of biological role, cell wall formation. This Syntrophotalea carbinolica (strain DSM 2380 / NBRC 103641 / GraBd1) (Pelobacter carbinolicus) protein is UDP-N-acetylenolpyruvoylglucosamine reductase.